A 90-amino-acid polypeptide reads, in one-letter code: UPF0298 protein RBAM_014860 (90 aa).

Belongs to the UPF0298 family.

The protein resides in the cytoplasm. This chain is UPF0298 protein RBAM_014860, found in Bacillus velezensis (strain DSM 23117 / BGSC 10A6 / LMG 26770 / FZB42) (Bacillus amyloliquefaciens subsp. plantarum).